A 266-amino-acid polypeptide reads, in one-letter code: 3-methyl-2-oxobutanoate hydroxymethyltransferase 2 (266 aa).

Residues D45 and D84 each coordinate Mg(2+). 3-methyl-2-oxobutanoate contacts are provided by residues 45 to 46, D84, and K112; that span reads DS. Residue E114 coordinates Mg(2+). E181 serves as the catalytic Proton acceptor.

This sequence belongs to the PanB family. As to quaternary structure, homodecamer; pentamer of dimers. Requires Mg(2+) as cofactor.

The protein resides in the cytoplasm. It carries out the reaction 3-methyl-2-oxobutanoate + (6R)-5,10-methylene-5,6,7,8-tetrahydrofolate + H2O = 2-dehydropantoate + (6S)-5,6,7,8-tetrahydrofolate. It functions in the pathway cofactor biosynthesis; (R)-pantothenate biosynthesis; (R)-pantoate from 3-methyl-2-oxobutanoate: step 1/2. Functionally, catalyzes the reversible reaction in which hydroxymethyl group from 5,10-methylenetetrahydrofolate is transferred onto alpha-ketoisovalerate to form ketopantoate. The protein is 3-methyl-2-oxobutanoate hydroxymethyltransferase 2 of Pseudomonas fluorescens (strain ATCC BAA-477 / NRRL B-23932 / Pf-5).